A 104-amino-acid chain; its full sequence is MAALQQKIRIRLKAFDHRLLDTSCDRIVDTAKRTGASPVGPIPLPTRRRIYCVLRSPHVDKDSREHFETRTHCRILDIYQPSPKTIDALIKLDLPAGVDIEVKL.

It belongs to the universal ribosomal protein uS10 family. Part of the 30S ribosomal subunit.

Involved in the binding of tRNA to the ribosomes. In Thermosynechococcus vestitus (strain NIES-2133 / IAM M-273 / BP-1), this protein is Small ribosomal subunit protein uS10.